Reading from the N-terminus, the 123-residue chain is Basic myotoxic phospholipase A2 PhTX-II (123 aa).

7 disulfides stabilise this stretch: cysteine 26-cysteine 116, cysteine 28-cysteine 45, cysteine 44-cysteine 95, cysteine 50-cysteine 123, cysteine 51-cysteine 88, cysteine 58-cysteine 81, and cysteine 75-cysteine 86. Ca(2+)-binding residues include tyrosine 27, glycine 29, and glycine 31. Histidine 48 is a catalytic residue. Aspartate 49 serves as a coordination point for Ca(2+). Aspartate 89 is an active-site residue.

Monomer. Ca(2+) serves as cofactor. Expressed by the venom gland.

Its subcellular location is the secreted. The enzyme catalyses a 1,2-diacyl-sn-glycero-3-phosphocholine + H2O = a 1-acyl-sn-glycero-3-phosphocholine + a fatty acid + H(+). With respect to regulation, P-bromophenacyl bromide (BPB) completely inhibits the catalytic and edematogenic activities. Enzymatic activity is also diminished by EDTA, heparin and crotapotins F2 and F3 from C.d.collilineatus. Inhibited by divalent cations different from calcium ions (cadmium, magnesium, manganese, zinc), since they act as competitive antagonists of this cofactor. Snake venom phospholipase A2 (PLA2) that induces myotoxicity and local edema in mice. In addition, it causes neuromuscular blockade in avian neuromuscular preparations with a significant direct action on skeletal muscle function. Myotoxic action is exerted by both enzymatic and non-enzymatic mechanisms. PLA2 catalyzes the calcium-dependent hydrolysis of the 2-acyl groups in 3-sn-phosphoglycerides. The chain is Basic myotoxic phospholipase A2 PhTX-II from Bothrocophias hyoprora (Amazonian hognose viper).